The sequence spans 367 residues: UDP-N-acetylglucosamine--N-acetylmuramyl-(pentapeptide) pyrophosphoryl-undecaprenol N-acetylglucosamine transferase (367 aa).

Residues threonine 15–glycine 17, asparagine 127, arginine 163, serine 191, isoleucine 249, and glutamine 294 contribute to the UDP-N-acetyl-alpha-D-glucosamine site.

Belongs to the glycosyltransferase 28 family. MurG subfamily.

Its subcellular location is the cell inner membrane. The catalysed reaction is di-trans,octa-cis-undecaprenyl diphospho-N-acetyl-alpha-D-muramoyl-L-alanyl-D-glutamyl-meso-2,6-diaminopimeloyl-D-alanyl-D-alanine + UDP-N-acetyl-alpha-D-glucosamine = di-trans,octa-cis-undecaprenyl diphospho-[N-acetyl-alpha-D-glucosaminyl-(1-&gt;4)]-N-acetyl-alpha-D-muramoyl-L-alanyl-D-glutamyl-meso-2,6-diaminopimeloyl-D-alanyl-D-alanine + UDP + H(+). It functions in the pathway cell wall biogenesis; peptidoglycan biosynthesis. Cell wall formation. Catalyzes the transfer of a GlcNAc subunit on undecaprenyl-pyrophosphoryl-MurNAc-pentapeptide (lipid intermediate I) to form undecaprenyl-pyrophosphoryl-MurNAc-(pentapeptide)GlcNAc (lipid intermediate II). The sequence is that of UDP-N-acetylglucosamine--N-acetylmuramyl-(pentapeptide) pyrophosphoryl-undecaprenol N-acetylglucosamine transferase from Burkholderia multivorans (strain ATCC 17616 / 249).